A 373-amino-acid chain; its full sequence is sn-glycerol-3-phosphate import ATP-binding protein UgpC 2 (373 aa).

The ABC transporter domain occupies 4–234 (IDIRQVRKSY…PASTFVASFI (231 aa)). Residue 36–43 (GPSGCGKS) coordinates ATP.

It belongs to the ABC transporter superfamily. sn-glycerol-3-phosphate importer (TC 3.A.1.1.3) family. The complex is composed of two ATP-binding proteins (UgpC), two transmembrane proteins (UgpA and UgpE) and a solute-binding protein (UgpB).

The protein localises to the cell inner membrane. It catalyses the reaction sn-glycerol 3-phosphate(out) + ATP + H2O = sn-glycerol 3-phosphate(in) + ADP + phosphate + H(+). Its function is as follows. Part of the ABC transporter complex UgpBAEC involved in sn-glycerol-3-phosphate (G3P) import. Responsible for energy coupling to the transport system. This chain is sn-glycerol-3-phosphate import ATP-binding protein UgpC 2, found in Agrobacterium fabrum (strain C58 / ATCC 33970) (Agrobacterium tumefaciens (strain C58)).